Consider the following 131-residue polypeptide: Histone H2A type 1-A (131 aa).

Residues 1–23 (MSGRGKQGGKARAKSKSRSSRAG) form a disordered region. Ser-2 carries the N-acetylserine modification. Ser-2 carries the phosphoserine; by RPS6KA5 modification. The residue at position 4 (Arg-4) is a Citrulline; alternate. Arg-4 carries the symmetric dimethylarginine; by PRMT5; alternate modification. An N6-(2-hydroxyisobutyryl)lysine modification is found at Lys-6. Residues 7–19 (QGGKARAKSKSRS) show a composition bias toward basic residues. Lys-10 bears the N6-(2-hydroxyisobutyryl)lysine; alternate mark. Lys-10 is modified (N6-(beta-hydroxybutyryl)lysine; alternate). Lys-10 is modified (N6-lactoyllysine; alternate). Lys-10 is subject to N6-succinyllysine; alternate. Residue Lys-14 is modified to N6-(beta-hydroxybutyryl)lysine. Residues Lys-14 and Lys-16 each participate in a glycyl lysine isopeptide (Lys-Gly) (interchain with G-Cter in ubiquitin) cross-link. Lys-37 is modified (N6-(2-hydroxyisobutyryl)lysine; alternate). Lys-37 bears the N6-(beta-hydroxybutyryl)lysine; alternate mark. Lys-37 bears the N6-crotonyllysine; alternate mark. An N6-(2-hydroxyisobutyryl)lysine mark is found at Lys-75 and Lys-76. Position 96 is an N6-(2-hydroxyisobutyryl)lysine; alternate (Lys-96). At Lys-96 the chain carries N6-(beta-hydroxybutyryl)lysine; alternate. The residue at position 96 (Lys-96) is an N6-succinyllysine; alternate. Lys-96 is subject to N6-glutaryllysine; alternate. The residue at position 105 (Gln-105) is an N5-methylglutamine. Lys-119 carries the post-translational modification N6-(2-hydroxyisobutyryl)lysine; alternate. An N6-(beta-hydroxybutyryl)lysine; alternate modification is found at Lys-119. Residues Lys-119 and Lys-120 each carry the N6-crotonyllysine; alternate modification. Lys-119 and Lys-120 each carry N6-glutaryllysine; alternate. A Glycyl lysine isopeptide (Lys-Gly) (interchain with G-Cter in ubiquitin); alternate cross-link involves residue Lys-120. Thr-121 is subject to Phosphothreonine; by DCAF1. Lys-127 is modified (N6-crotonyllysine).

It belongs to the histone H2A family. As to quaternary structure, the nucleosome is a histone octamer containing two molecules each of H2A, H2B, H3 and H4 assembled in one H3-H4 heterotetramer and two H2A-H2B heterodimers. The octamer wraps approximately 147 bp of DNA. Post-translationally, deiminated on Arg-4 in granulocytes upon calcium entry. In terms of processing, monoubiquitination of Lys-120 (H2AK119Ub) by RING1, TRIM37 and RNF2/RING2 complex gives a specific tag for epigenetic transcriptional repression and participates in X chromosome inactivation of female mammals. It is involved in the initiation of both imprinted and random X inactivation. Ubiquitinated H2A is enriched in inactive X chromosome chromatin. Ubiquitination of H2A functions downstream of methylation of 'Lys-27' of histone H3 (H3K27me). H2AK119Ub by RNF2/RING2 can also be induced by ultraviolet and may be involved in DNA repair. Monoubiquitination of Lys-120 (H2AK119Ub) by TRIM37 may promote transformation of cells in a number of breast cancers. Following DNA double-strand breaks (DSBs), it is ubiquitinated through 'Lys-63' linkage of ubiquitin moieties by the E2 ligase UBE2N and the E3 ligases RNF8 and RNF168, leading to the recruitment of repair proteins to sites of DNA damage. Ubiquitination at Lys-14 and Lys-16 (H2AK13Ub and H2AK15Ub, respectively) in response to DNA damage is initiated by RNF168 that mediates monoubiquitination at these 2 sites, and 'Lys-63'-linked ubiquitin are then conjugated to monoubiquitin; RNF8 is able to extend 'Lys-63'-linked ubiquitin chains in vitro. Deubiquitinated by USP51 at Lys-14 and Lys-16 (H2AK13Ub and H2AK15Ub, respectively) after damaged DNA is repaired. H2AK119Ub and ionizing radiation-induced 'Lys-63'-linked ubiquitination (H2AK13Ub and H2AK15Ub) are distinct events. Phosphorylation on Ser-2 (H2AS1ph) is enhanced during mitosis. Phosphorylation on Ser-2 by RPS6KA5/MSK1 directly represses transcription. Acetylation of H3 inhibits Ser-2 phosphorylation by RPS6KA5/MSK1. Phosphorylation at Thr-121 (H2AT120ph) by DCAF1 is present in the regulatory region of many tumor suppresor genes and down-regulates their transcription. Post-translationally, glutamine methylation at Gln-105 (H2AQ104me) by FBL is specifically dedicated to polymerase I. It is present at 35S ribosomal DNA locus and impairs binding of the FACT complex. In terms of processing, symmetric dimethylation on Arg-4 by the PRDM1/PRMT5 complex may play a crucial role in the germ-cell lineage. Crotonylation (Kcr) is specifically present in male germ cells and marks testis-specific genes in post-meiotic cells, including X-linked genes that escape sex chromosome inactivation in haploid cells. Crotonylation marks active promoters and enhancers and confers resistance to transcriptional repressors. It is also associated with post-meiotically activated genes on autosomes. Post-translationally, lactylated in macrophages by EP300/P300 by using lactoyl-CoA directly derived from endogenous or exogenous lactate, leading to stimulates gene transcription.

The protein localises to the nucleus. Its subcellular location is the chromosome. In terms of biological role, core component of nucleosome. Nucleosomes wrap and compact DNA into chromatin, limiting DNA accessibility to the cellular machineries which require DNA as a template. Histones thereby play a central role in transcription regulation, DNA repair, DNA replication and chromosomal stability. DNA accessibility is regulated via a complex set of post-translational modifications of histones, also called histone code, and nucleosome remodeling. The protein is Histone H2A type 1-A of Homo sapiens (Human).